A 611-amino-acid chain; its full sequence is Elongation factor 1 alpha-like protein (611 aa).

Disordered stretches follow at residues 1-21 and 105-138; these read MAYS…DEGE and SISQ…DEKT. Ser-124 is subject to Phosphoserine. The segment covering 126-138 has biased composition (basic and acidic residues); it reads GERNGEEANDEKT. Positions 165-390 constitute a tr-type G domain; it reads LPHLSFVVLG…LENAAFKISK (226 aa). The G1 stretch occupies residues 174–181; that stretch reads GHVDAGKS. GTP is bound at residue 174–181; the sequence is GHVDAGKS. The interval 230-234 is G2; the sequence is GVTVS. Residues 251 to 254 form a G3 region; it reads DAPG. GTP contacts are provided by residues 313-316 and 352-354; these read NKMD and SGF. The G4 stretch occupies residues 313–316; it reads NKMD. The tract at residues 352–354 is G5; sequence SGF.

This sequence belongs to the TRAFAC class translation factor GTPase superfamily. Classic translation factor GTPase family. In terms of assembly, component of the Dom34-Hbs1 complex, also named Pelota-HBS1L complex, composed of DOM34 and HBS1.

The protein localises to the cytoplasm. The catalysed reaction is GTP + H2O = GDP + phosphate + H(+). In terms of biological role, GTPase component of the Dom34-Hbs1 complex, a complex that recognizes stalled ribosomes and triggers the No-Go Decay (NGD) pathway. The Dom34-Hbs1 complex recognizes ribosomes stalled at the 3' end of an mRNA and engages stalled ribosomes by destabilizing mRNA in the mRNA channel. Following ribosome-binding, the Pelota-HBS1L complex promotes the disassembly of stalled ribosomes, followed by degradation of damaged mRNAs as part of the NGD pathway. The Dom34-Hbs1 complex is also involved in non-functional rRNA decay. The protein is Elongation factor 1 alpha-like protein of Saccharomyces cerevisiae (strain ATCC 204508 / S288c) (Baker's yeast).